The sequence spans 206 residues: 2,3-bisphosphoglycerate-dependent phosphoglycerate mutase (206 aa).

Substrate-binding positions include 9–16, 22–23, R61, 88–91, K99, 115–116, and 159–160; these read RHGQSEWN, TG, ERDY, RR, and GN. H10 (tele-phosphohistidine intermediate) is an active-site residue. E88 functions as the Proton donor/acceptor in the catalytic mechanism.

It belongs to the phosphoglycerate mutase family. BPG-dependent PGAM subfamily. In terms of assembly, homodimer.

The enzyme catalyses (2R)-2-phosphoglycerate = (2R)-3-phosphoglycerate. Its pathway is carbohydrate degradation; glycolysis; pyruvate from D-glyceraldehyde 3-phosphate: step 3/5. Its function is as follows. Catalyzes the interconversion of 2-phosphoglycerate and 3-phosphoglycerate. In Bartonella bacilliformis (strain ATCC 35685 / KC583 / Herrer 020/F12,63), this protein is 2,3-bisphosphoglycerate-dependent phosphoglycerate mutase.